A 166-amino-acid polypeptide reads, in one-letter code: Thiamine precursor transporter HmpT (166 aa).

The next 5 membrane-spanning stretches (helical) occupy residues 14 to 34, 35 to 55, 62 to 82, 105 to 125, and 126 to 146; these read LLAIWTALTFVLGRLFTFPIP, GSAGNILTLLDVGIYTAVFLF, IIGGFAAFLLDLTAGFSNYMF, FLLSLLVMVGGYFIVGGLMYG, and WGSAIAGLWVNIVQVIVGFVL.

As to quaternary structure, in E.coli forms a stable energy-coupling factor (ECF) transporter complex composed of 2 membrane-embedded substrate-binding protein (S component), 2 ATP-binding proteins (A and A' components) and 2 transmembrane proteins (T component), probably with a stoichiometry of 2:1:1:2. May be able to interact with more than 1 S component at a time.

Its subcellular location is the cell membrane. Functionally, probably a thiamine precursor-binding protein that interacts with the energy-coupling factor (ECF) ABC-transporter complex. Unlike classic ABC transporters this ECF transporter provides the energy necessary to transport a number of different substrates. The substrates themselves are bound by transmembrane, not extracytoplasmic soluble proteins. This chain is Thiamine precursor transporter HmpT (hmpT), found in Lactococcus lactis subsp. cremoris (strain MG1363).